Here is a 486-residue protein sequence, read N- to C-terminus: Iron-sulfur cluster assembly SufBD family protein ycf24 (486 aa).

This sequence belongs to the iron-sulfur cluster assembly SufBD family.

Its subcellular location is the plastid. It localises to the chloroplast. This Trieres chinensis (Marine centric diatom) protein is Iron-sulfur cluster assembly SufBD family protein ycf24 (ycf24).